Consider the following 71-residue polypeptide: Large ribosomal subunit protein uL30 (71 aa).

It belongs to the universal ribosomal protein uL30 family. As to quaternary structure, part of the 50S ribosomal subunit.

This Mycolicibacterium paratuberculosis (strain ATCC BAA-968 / K-10) (Mycobacterium paratuberculosis) protein is Large ribosomal subunit protein uL30.